The chain runs to 384 residues: Succinyl-diaminopimelate desuccinylase (384 aa).

Residue His-72 participates in Zn(2+) binding. Asp-74 is an active-site residue. Zn(2+) is bound at residue Asp-105. Glu-139 serves as the catalytic Proton acceptor. Residues Glu-140, Glu-168, and His-355 each coordinate Zn(2+).

Belongs to the peptidase M20A family. DapE subfamily. In terms of assembly, homodimer. Requires Zn(2+) as cofactor. It depends on Co(2+) as a cofactor.

The enzyme catalyses N-succinyl-(2S,6S)-2,6-diaminopimelate + H2O = (2S,6S)-2,6-diaminopimelate + succinate. The protein operates within amino-acid biosynthesis; L-lysine biosynthesis via DAP pathway; LL-2,6-diaminopimelate from (S)-tetrahydrodipicolinate (succinylase route): step 3/3. Its function is as follows. Catalyzes the hydrolysis of N-succinyl-L,L-diaminopimelic acid (SDAP), forming succinate and LL-2,6-diaminopimelate (DAP), an intermediate involved in the bacterial biosynthesis of lysine and meso-diaminopimelic acid, an essential component of bacterial cell walls. The protein is Succinyl-diaminopimelate desuccinylase of Blochmanniella pennsylvanica (strain BPEN).